Here is a 298-residue protein sequence, read N- to C-terminus: ADP/ATP translocase 1 (298 aa).

Residues 1-7 (MGDQALS) lie on the Mitochondrial intermembrane side of the membrane. Residue G2 is modified to N-acetylglycine. A Solcar 1 repeat occupies 6–98 (LSFLKDFLAG…FAFKDKYKQI (93 aa)). Position 7 is a phosphoserine (S7). A helical transmembrane segment spans residues 8-37 (FLKDFLAGGIAAAVSKTAVAPIERVKLLLQ). Residues 38 to 74 (VQHASKQISAEKQYKGIIDCVVRIPKEQGFLSFWRGN) are Mitochondrial matrix-facing. Residue K52 is modified to N6,N6,N6-trimethyllysine. The helical transmembrane segment at 75–99 (LANVIRYFPTQALNFAFKDKYKQIF) threads the bilayer. ADP is bound by residues R80 and K92. Topologically, residues 100-109 (LGGVDRHKQF) are mitochondrial intermembrane. Residues 110–130 (WRYFAGNLASGGAAGATSLCF) traverse the membrane as a helical segment. Solcar repeat units follow at residues 111–201 (RYFA…AKGM) and 212–297 (VSWM…IKKY). The Mitochondrial matrix segment spans residues 131–178 (VYPLDFARTRLAADVGKGSSQREFNGLGDCLTKIFKSDGLKGLYQGFS). K147 bears the N6-succinyllysine mark. A phosphoserine mark is found at S149 and S150. C160 carries the post-translational modification S-nitrosocysteine. Residues 179–199 (VSVQGIIIYRAAYFGVYDTAK) form a helical membrane-spanning segment. Over 200 to 210 (GMLPDPKNVHI) the chain is Mitochondrial intermembrane. The chain crosses the membrane as a helical span at residues 211-231 (IVSWMIAQSVTAVAGLVSYPF). Residues 232 to 273 (DTVRRRMMMQSGRKGADIMYTGTVDCWRKIAKDEGRKAFFKG) are Mitochondrial matrix-facing. R235 contacts ADP. The important for transport activity stretch occupies residues 235 to 240 (RRRMMM). Residues 235-240 (RRRMMM) carry the Nucleotide carrier signature motif motif. Residues K245 and K272 each carry the N6-succinyllysine modification. The helical transmembrane segment at 274–291 (AWSNVLRGMGGAFVLVLY) threads the bilayer. At 292 to 298 (DEIKKYV) the chain is on the mitochondrial intermembrane side.

The protein belongs to the mitochondrial carrier (TC 2.A.29) family. As to quaternary structure, monomer. Found in a complex with ARL2, ARL2BP and SLC25A4/ANT1. Interacts with ARL2BP. Interacts with TIMM44; leading to inhibit the presequence translocase TIMM23, thereby promoting stabilization of PINK1. In terms of processing, under cell death induction, transglutaminated by TGM2. Transglutamination leads to formation of covalent cross-links between a glutamine and the epsilon-amino group of a lysine residue, forming polymers.

The protein resides in the mitochondrion inner membrane. It is found in the membrane. It carries out the reaction ADP(in) + ATP(out) = ADP(out) + ATP(in). It catalyses the reaction H(+)(in) = H(+)(out). Its activity is regulated as follows. The matrix-open state (m-state) is inhibited by the membrane-permeable bongkrekic acid (BKA). The cytoplasmic-open state (c-state) is inhibited by the membrane-impermeable toxic inhibitor carboxyatractyloside (CATR). Proton transporter activity is inhibited by ADP:ATP antiporter activity. Its function is as follows. ADP:ATP antiporter that mediates import of ADP into the mitochondrial matrix for ATP synthesis, and export of ATP out to fuel the cell. Cycles between the cytoplasmic-open state (c-state) and the matrix-open state (m-state): operates by the alternating access mechanism with a single substrate-binding site intermittently exposed to either the cytosolic (c-state) or matrix (m-state) side of the inner mitochondrial membrane. In addition to its ADP:ATP antiporter activity, also involved in mitochondrial uncoupling and mitochondrial permeability transition pore (mPTP) activity. Plays a role in mitochondrial uncoupling by acting as a proton transporter: proton transport uncouples the proton flows via the electron transport chain and ATP synthase to reduce the efficiency of ATP production and cause mitochondrial thermogenesis. Proton transporter activity is inhibited by ADP:ATP antiporter activity, suggesting that SLC25A4/ANT1 acts as a master regulator of mitochondrial energy output by maintaining a delicate balance between ATP production (ADP:ATP antiporter activity) and thermogenesis (proton transporter activity). Proton transporter activity requires free fatty acids as cofactor, but does not transport it. Also plays a key role in mPTP opening, a non-specific pore that enables free passage of the mitochondrial membranes to solutes of up to 1.5 kDa, and which contributes to cell death. It is however unclear if SLC25A4/ANT1 constitutes a pore-forming component of mPTP or regulates it. Acts as a regulator of mitophagy independently of ADP:ATP antiporter activity: promotes mitophagy via interaction with TIMM44, leading to inhibit the presequence translocase TIMM23, thereby promoting stabilization of PINK1. The polypeptide is ADP/ATP translocase 1 (Rattus norvegicus (Rat)).